Consider the following 62-residue polypeptide: Potassium channel toxin alpha-KTx Tx308 (62 aa).

A signal peptide spans 1-18 (MQKLFIVLLLFCILRLDA). 3 disulfides stabilise this stretch: Cys-28/Cys-46, Cys-33/Cys-59, and Cys-37/Cys-61.

This sequence belongs to the short scorpion toxin superfamily. Potassium channel inhibitor family. Alpha-KTx 23 subfamily. As to expression, expressed by the venom gland.

The protein resides in the secreted. In terms of biological role, may block potassium channels. In Buthus israelis (Israeli scorpion), this protein is Potassium channel toxin alpha-KTx Tx308.